The following is a 1868-amino-acid chain: Inactive histone-lysine N-methyltransferase 2E (1868 aa).

Positions D63–Y66 match the HCFC1-binding motif (HBM) motif. Residues V118–R166 form a PHD-type zinc finger. Zn(2+)-binding residues include C121, C123, C135, C138, H143, C146, C160, and C163. Disordered regions lie at residues R178–E197, A217–S268, and G308–R329. Positions P330 to D447 constitute an SET domain. The O-linked (GlcNAc) serine glycan is linked to S435. O-linked (GlcNAc) threonine glycosylation is present at T440. The interval K472–I504 is disordered. Over residues K494 to I504 the composition is skewed to basic and acidic residues. A coiled-coil region spans residues V559 to K613. A compositionally biased stretch (basic residues) spans N646–T670. The segment at N646 to P682 is disordered. Phosphoserine is present on residues S837 and S845. The span at Y884–P908 shows a compositional bias: low complexity. 2 disordered regions span residues Y884 to R924 and S1038 to V1068. A compositionally biased stretch (polar residues) spans P1049 to V1068. The residue at position 1070 (S1070) is a Phosphoserine. Disordered regions lie at residues K1165–A1222, S1236–I1315, P1334–Q1565, and V1585–P1842. Over residues S1184–G1197 the composition is skewed to low complexity. Positions S1203–Q1213 are enriched in polar residues. A Phosphoserine modification is found at S1282. Residues S1282 to G1291 are compositionally biased toward basic and acidic residues. Composition is skewed to low complexity over residues S1294–S1312 and P1348–G1363. Phosphoserine is present on S1364. Polar residues-rich tracts occupy residues A1389–A1421, H1451–T1463, and S1488–R1498. Positions A1506–A1518 are enriched in low complexity. A compositionally biased stretch (polar residues) spans T1519–T1547. The segment covering A1548–S1558 has biased composition (pro residues). Positions V1585–V1603 are enriched in polar residues. Positions V1631–G1642 are enriched in pro residues. Residues Q1647–S1656 are compositionally biased toward polar residues. Positions L1682–A1692 are enriched in pro residues. Over residues Q1706 to V1716 the composition is skewed to polar residues. Pro residues predominate over residues A1719–A1732. Over residues Q1806–A1816 the composition is skewed to polar residues.

This sequence belongs to the class V-like SAM-binding methyltransferase superfamily. Histone-lysine methyltransferase family. TRX/MLL subfamily. Component of a complex composed of KMT2E, OGT and USP7; the complex stabilizes KMT2E, preventing KMT2E ubiquitination and proteasomal-mediated degradation. Interacts (via N-terminus) with OGT (via TRP repeats). Interacts with deubiquitinating enzyme USP7 (via MATH domain). Interacts (via HBM motif) with HCFC1 (via Kelch domain). Interacts with E2F1; the interaction is probably indirect and is mediated via HCFC1. Ubiquitinated. Deubiquitinated by USP7. In terms of processing, O-glycosylated at Ser-435 and Thr-440 in the SET domain by OGT which probably prevents KMT2E proteasomal-mediated degradation.

The protein localises to the chromosome. It is found in the cytoplasm. The protein resides in the cytoskeleton. Its subcellular location is the microtubule organizing center. It localises to the centrosome. The protein localises to the nucleus speckle. Associates with chromatin regions downstream of transcriptional start sites of active genes and thus regulates gene transcription. Chromatin interaction is mediated via the binding to tri-methylated histone H3 at 'Lys-4' (H3K4me3). Key regulator of hematopoiesis involved in terminal myeloid differentiation and in the regulation of hematopoietic stem cell (HSCs) self-renewal by a mechanism that involves DNA methylation. Also acts as an important cell cycle regulator, participating in cell cycle regulatory network machinery at multiple cell cycle stages including G1/S transition, S phase progression and mitotic entry. Recruited to E2F1 responsive promoters by HCFC1 where it stimulates tri-methylation of histone H3 at 'Lys-4' and transcriptional activation and thereby facilitates G1 to S phase transition. During myoblast differentiation, required to suppress inappropriate expression of S-phase-promoting genes and maintain expression of determination genes in quiescent cells. The sequence is that of Inactive histone-lysine N-methyltransferase 2E (Kmt2e) from Mus musculus (Mouse).